An 837-amino-acid chain; its full sequence is Ribosome-releasing factor 2, mitochondrial (837 aa).

Residues 1 to 29 (MFSINARTKVPIWVPFIARKGFSMSTRQL) constitute a mitochondrion transit peptide. The tr-type G domain occupies 40 to 331 (LNTRNIGIIA…GVVDYLPSPL (292 aa)). GTP-binding positions include 49 to 56 (AHIDAGKT), 113 to 117 (DTPGH), and 167 to 170 (NKMD). The interval 338–359 (ITASTSKVSKKQKQKKNSKVSS) is disordered. A compositionally biased stretch (basic residues) spans 345–355 (VSKKQKQKKNS).

The protein belongs to the TRAFAC class translation factor GTPase superfamily. Classic translation factor GTPase family. EF-G/EF-2 subfamily.

Its subcellular location is the mitochondrion. Its function is as follows. Mitochondrial GTPase that mediates the disassembly of ribosomes from messenger RNA at the termination of mitochondrial protein biosynthesis. Not involved in the GTP-dependent ribosomal translocation step during translation elongation. This Meyerozyma guilliermondii (strain ATCC 6260 / CBS 566 / DSM 6381 / JCM 1539 / NBRC 10279 / NRRL Y-324) (Yeast) protein is Ribosome-releasing factor 2, mitochondrial.